A 102-amino-acid chain; its full sequence is Integration host factor subunit beta (102 aa).

The segment at 54–102 (HHRPARMGRNPKTGEPVALPAKYVPHFKPGKELRERVNSSRHQAPLRSQ) is disordered. Residues 82–91 (PGKELRERVN) show a composition bias toward basic and acidic residues. The segment covering 93 to 102 (SRHQAPLRSQ) has biased composition (polar residues).

Belongs to the bacterial histone-like protein family. Heterodimer of an alpha and a beta chain.

Its function is as follows. This protein is one of the two subunits of integration host factor, a specific DNA-binding protein that functions in genetic recombination as well as in transcriptional and translational control. The sequence is that of Integration host factor subunit beta from Halorhodospira halophila (strain DSM 244 / SL1) (Ectothiorhodospira halophila (strain DSM 244 / SL1)).